A 471-amino-acid polypeptide reads, in one-letter code: Vanillate/3-O-methylgallate O-demethylase (471 aa).

Residue Y31 coordinates substrate. Q57 contributes to the (6S)-5,6,7,8-tetrahydrofolate binding site. H60 lines the substrate pocket. (6S)-5,6,7,8-tetrahydrofolate is bound by residues Q93 and V120. R122 contributes to the substrate binding site. (6S)-5,6,7,8-tetrahydrofolate contacts are provided by Q165 and E215. Y247–N250 provides a ligand contact to substrate. Position 256 (W256) interacts with (6S)-5,6,7,8-tetrahydrofolate.

It belongs to the GcvT family. In terms of assembly, homodimer.

It catalyses the reaction vanillate + (6S)-5,6,7,8-tetrahydrofolate = (6S)-5-methyl-5,6,7,8-tetrahydrofolate + 3,4-dihydroxybenzoate. It carries out the reaction 3-O-methylgallate + (6S)-5,6,7,8-tetrahydrofolate = 3,4,5-trihydroxybenzoate + (6S)-5-methyl-5,6,7,8-tetrahydrofolate. Its pathway is secondary metabolite metabolism; lignin degradation. Functionally, involved in the catabolism of vanillate and syringate. Catalyzes the transfer of a methyl moiety from vanillate or 3-O-methylgallate (3MGA) to tetrahydrofolate, forming protocatechuate (PCA) or gallate, respectively, and methyl-tetrahydrofolate. Has similar activities with both substrates. Cannot use syringate. Uses an ordered, sequential kinetic mechanism. This is Vanillate/3-O-methylgallate O-demethylase from Sphingobium sp. (strain NBRC 103272 / SYK-6).